The sequence spans 420 residues: MLKFIDLFAGIGGMRLGFEQAMHELGIETACVLSSEIDKHAQTTYAMNFHEQSQGDITQIQDFPSFDFLLAGFPCQPFSYAGKQKGFGDTRGTLFFEIERILKAYRPKGFLLENVRGLTTHDKGRTFKTILQKLHELNYGVYLILNSSNFQVPQNRLRVYIVGLDQSQPELTITSHIGATDSHKFKQLSNQASLFDTNKIMLVRDILEDHPLDKYNCSTDFVNKLLAFIGHPIKLNGKRLIDYRNGNSIHSWELGIKGECTSDEIQFMNALIANRRKKHFGAHQDGKKLTIEQIKTFFEHDDLDSIMQSLITKGYLQEVNGRFNPVAGNMSFEVFKFLDPDSVSITLVSSDAHKIGVVHQNRIRRITPRECARLQGFPDSFQFHPKDSLAYRQFGNSVSVPVVKAVILDLFKSADLASCF.

The region spanning 2–417 (LKFIDLFAGI…LDLFKSADLA (416 aa)) is the SAM-dependent MTase C5-type domain. The active site involves Cys-75.

The protein belongs to the class I-like SAM-binding methyltransferase superfamily. C5-methyltransferase family.

It carries out the reaction a 2'-deoxycytidine in DNA + S-adenosyl-L-methionine = a 5-methyl-2'-deoxycytidine in DNA + S-adenosyl-L-homocysteine + H(+). Its function is as follows. A methylase that recognizes the double-stranded sequence 5'-GGYRCC-3', methylates C-5 on both strands, and protects the DNA from cleavage by the HgiCI endonuclease. The protein is Type II methyltransferase M.HgiCI (hgiCIM) of Herpetosiphon aurantiacus (Herpetosiphon giganteus).